The following is a 188-amino-acid chain: Peptidyl-tRNA hydrolase (188 aa).

Position 18 (Tyr18) interacts with tRNA. Catalysis depends on His23, which acts as the Proton acceptor. Residues Tyr67, Asn69, and Asn115 each coordinate tRNA.

Belongs to the PTH family. In terms of assembly, monomer.

It localises to the cytoplasm. It catalyses the reaction an N-acyl-L-alpha-aminoacyl-tRNA + H2O = an N-acyl-L-amino acid + a tRNA + H(+). In terms of biological role, hydrolyzes ribosome-free peptidyl-tRNAs (with 1 or more amino acids incorporated), which drop off the ribosome during protein synthesis, or as a result of ribosome stalling. Catalyzes the release of premature peptidyl moieties from peptidyl-tRNA molecules trapped in stalled 50S ribosomal subunits, and thus maintains levels of free tRNAs and 50S ribosomes. The chain is Peptidyl-tRNA hydrolase from Salinibacter ruber (strain DSM 13855 / M31).